We begin with the raw amino-acid sequence, 92 residues long: Small ribosomal subunit protein uS19 (92 aa).

The protein belongs to the universal ribosomal protein uS19 family.

Functionally, protein S19 forms a complex with S13 that binds strongly to the 16S ribosomal RNA. This chain is Small ribosomal subunit protein uS19, found in Polaromonas naphthalenivorans (strain CJ2).